Here is a 122-residue protein sequence, read N- to C-terminus: Large ribosomal subunit protein uL18 (122 aa).

This sequence belongs to the universal ribosomal protein uL18 family. As to quaternary structure, part of the 50S ribosomal subunit; part of the 5S rRNA/L5/L18/L25 subcomplex. Contacts the 5S and 23S rRNAs.

Its function is as follows. This is one of the proteins that bind and probably mediate the attachment of the 5S RNA into the large ribosomal subunit, where it forms part of the central protuberance. The chain is Large ribosomal subunit protein uL18 from Synechococcus sp. (strain JA-2-3B'a(2-13)) (Cyanobacteria bacterium Yellowstone B-Prime).